The sequence spans 222 residues: Superoxide dismutase [Mn], mitochondrial (222 aa).

The N-terminal 24 residues, 1–24 (MLCRAACSAGRRLGPAASTAGSRH), are a transit peptide targeting the mitochondrion. His50 serves as a coordination point for Mn(2+). Residue Tyr58 is modified to 3'-nitrotyrosine. N6-acetyllysine; alternate occurs at positions 68 and 75. 2 positions are modified to N6-succinyllysine; alternate: Lys68 and Lys75. His98 contributes to the Mn(2+) binding site. Lys114 bears the N6-acetyllysine mark. An N6-acetyllysine; alternate mark is found at Lys122 and Lys130. An N6-succinyllysine; alternate mark is found at Lys122 and Lys130. Asp183 and His187 together coordinate Mn(2+). N6-acetyllysine is present on Lys202.

This sequence belongs to the iron/manganese superoxide dismutase family. In terms of assembly, homotetramer. Requires Mn(2+) as cofactor. Nitrated under oxidative stress. Nitration coupled with oxidation inhibits the catalytic activity. In terms of processing, acetylation at Lys-122 decreases enzymatic activity. Deacetylated by SIRT3 upon exposure to ionizing radiations or after long fasting. Post-translationally, polyubiquitinated; leading to proteasomal degradation. Deubiquitinated by USP36 which increases protein stability.

The protein resides in the mitochondrion matrix. It carries out the reaction 2 superoxide + 2 H(+) = H2O2 + O2. In terms of biological role, destroys superoxide anion radicals which are normally produced within the cells and which are toxic to biological systems. This is Superoxide dismutase [Mn], mitochondrial (Sod2) from Rattus norvegicus (Rat).